The chain runs to 319 residues: DNA-directed RNA polymerases IV and V subunit 3B (319 aa).

Met1 carries the post-translational modification N-acetylmethionine.

Belongs to the archaeal Rpo3/eukaryotic RPB3 RNA polymerase subunit family. Component of the RNA polymerase IV and V complexes. Interacts with NRPB11, SHH1, GRP23 and NRPD1.

It localises to the nucleus. DNA-dependent RNA polymerase catalyzes the transcription of DNA into RNA using the four ribonucleoside triphosphates as substrates. Component of RNA polymerases IV and V which mediate short-interfering RNAs (siRNA) accumulation and subsequent RNA-directed DNA methylation-dependent (RdDM) transcriptional gene silencing (TGS) of endogenous repeated sequences, including transposable elements. The chain is DNA-directed RNA polymerases IV and V subunit 3B (NRPD3B) from Arabidopsis thaliana (Mouse-ear cress).